We begin with the raw amino-acid sequence, 285 residues long: RNA 5'-monophosphate methyltransferase (285 aa).

The segment at 1–28 (MAATQELSKGGVEEAVEEDDPAALKPGA) is disordered. S-adenosyl-L-methionine contacts are provided by residues R46, N77, D111, 136 to 137 (DI), and M165. The 223-residue stretch at 53 to 275 (ELLRQLFPPE…KHTEETQAIP (223 aa)) folds into the Bin3-type SAM domain.

This sequence belongs to the methyltransferase superfamily. Interacts with DICER1; the interaction may be mediated by RNA.

The protein localises to the cytoplasm. It catalyses the reaction a 5'-end 5'-phospho-ribonucleoside-RNA + S-adenosyl-L-methionine = a 5'-end (5'-methylphospho)-ribonucleoside-RNA + S-adenosyl-L-homocysteine. The enzyme catalyses a 5'-end 5'-phospho-ribonucleoside-RNA + 2 S-adenosyl-L-methionine = a 5'-end (5'-bismethylphospho)-ribonucleoside-RNA + 2 S-adenosyl-L-homocysteine. O-methyltransferase that specifically monomethylates 5'-monophosphate of cytoplasmic histidyl tRNA (tRNA(His)), acting as a capping enzyme by protecting tRNA(His) from cleavage by DICER1. Also able, with less efficiently, to methylate the 5' monophosphate of a subset of pre-miRNAs, acting as a negative regulator of miRNA processing. The 5' monophosphate of pre-miRNAs is recognized by DICER1 and is required for pre-miRNAs processing: methylation at this position reduces the processing of pre-miRNAs by DICER1. Was also reported to mediate dimethylation of pre-miR-145; however dimethylation cannot be reproduced by another group which observes a monomethylation of pre-miR-145. The protein is RNA 5'-monophosphate methyltransferase of Rattus norvegicus (Rat).